The following is a 313-amino-acid chain: Probable alpha-L-glutamate ligase (313 aa).

Positions 112–294 (LQMLMAQGIA…IALQMIVHLE (183 aa)) constitute an ATP-grasp domain. ATP is bound by residues Lys148, 185–186 (EF), Asp194, and 218–220 (RAN). Mg(2+)-binding residues include Asp255, Glu267, and Asn269. Residues Asp255, Glu267, and Asn269 each coordinate Mn(2+).

This sequence belongs to the RimK family. The cofactor is Mg(2+). Requires Mn(2+) as cofactor.

The chain is Probable alpha-L-glutamate ligase from Pasteurella multocida (strain Pm70).